We begin with the raw amino-acid sequence, 611 residues long: Dual specificity protein phosphatase CDC14AB (611 aa).

An a region spans residues Asp23–Glu178. The segment at Thr179–Glu192 is linker. A b region spans residues Asn193–Arg359. Positions Gly194–Asp352 constitute a Tyrosine-protein phosphatase domain. Cys294 (phosphocysteine intermediate) is an active-site residue. The disordered stretch occupies residues Lys408 to Tyr611. A compositionally biased stretch (low complexity) spans Ser456–Ser490. Over residues Thr491–Glu511 the composition is skewed to polar residues. A compositionally biased stretch (low complexity) spans Ser512 to Ser553. 2 stretches are compositionally biased toward polar residues: residues Lys554–Ser569 and Gly591–Tyr611.

It belongs to the protein-tyrosine phosphatase family. Non-receptor class CDC14 subfamily.

It is found in the nucleus. Its subcellular location is the cytoplasm. It localises to the cytoskeleton. The protein resides in the microtubule organizing center. The protein localises to the centrosome. It is found in the spindle pole. Its subcellular location is the spindle. It localises to the cell projection. The protein resides in the kinocilium. It catalyses the reaction O-phospho-L-tyrosyl-[protein] + H2O = L-tyrosyl-[protein] + phosphate. The catalysed reaction is O-phospho-L-seryl-[protein] + H2O = L-seryl-[protein] + phosphate. It carries out the reaction O-phospho-L-threonyl-[protein] + H2O = L-threonyl-[protein] + phosphate. Its function is as follows. Dual-specificity phosphatase. Required for centrosome separation and productive cytokinesis during cell division. Dephosphorylates SIRT2 around early anaphase. May dephosphorylate the APC subunit FZR1/CDH1, thereby promoting APC-FZR1 dependent degradation of mitotic cyclins and subsequent exit from mitosis. This chain is Dual specificity protein phosphatase CDC14AB (cdc14ab), found in Danio rerio (Zebrafish).